A 418-amino-acid chain; its full sequence is Putative competence-damage inducible protein (418 aa).

This sequence belongs to the CinA family.

In Streptococcus pneumoniae (strain 70585), this protein is Putative competence-damage inducible protein.